Consider the following 1160-residue polypeptide: Protein GIGANTEA (1160 aa).

Residues 158–169 (CSSTSDQASSCE) are compositionally biased toward polar residues. Disordered regions lie at residues 158–188 (CSST…RKPL), 600–629 (GGSK…RNRC), and 800–830 (PVKK…SRSH). Residues 170–187 (SMEKRANGSPRNEPDRKP) show a composition bias toward basic and acidic residues. A compositionally biased stretch (basic and acidic residues) spans 801–812 (VKKDEPPIEEKN).

It belongs to the GIGANTEA family.

The protein localises to the nucleus. Functionally, involved in regulation of circadian rhythm, and in the control of the photoperiodic flowering. Acts as a suppressor of flowering under short-day (SD) and long-day (LD) conditions. Activates Hd1/CONSTANS gene. The protein is Protein GIGANTEA (GI) of Oryza sativa subsp. japonica (Rice).